A 390-amino-acid polypeptide reads, in one-letter code: Galactokinase (390 aa).

33 to 36 (EHTD) provides a ligand contact to substrate. ATP-binding positions include Ser-67 and 124-130 (GSGLSSS). Mg(2+)-binding residues include Ser-130 and Glu-162. The active-site Proton acceptor is Asp-174. Position 224 (Tyr-224) interacts with substrate.

Belongs to the GHMP kinase family. GalK subfamily.

It localises to the cytoplasm. The enzyme catalyses alpha-D-galactose + ATP = alpha-D-galactose 1-phosphate + ADP + H(+). It functions in the pathway carbohydrate metabolism; galactose metabolism. Its function is as follows. Catalyzes the transfer of the gamma-phosphate of ATP to D-galactose to form alpha-D-galactose-1-phosphate (Gal-1-P). The polypeptide is Galactokinase (Streptococcus mutans serotype c (strain ATCC 700610 / UA159)).